Here is a 160-residue protein sequence, read N- to C-terminus: Large ribosomal subunit protein uL22c (160 aa).

The protein belongs to the universal ribosomal protein uL22 family. Part of the 50S ribosomal subunit.

The protein localises to the plastid. It is found in the chloroplast. Functionally, this protein binds specifically to 23S rRNA. In terms of biological role, the globular domain of the protein is located near the polypeptide exit tunnel on the outside of the subunit, while an extended beta-hairpin is found that lines the wall of the exit tunnel in the center of the 70S ribosome. This is Large ribosomal subunit protein uL22c (rpl22) from Capsella bursa-pastoris (Shepherd's purse).